Consider the following 148-residue polypeptide: Phospholipase A2-alpha (148 aa).

A signal peptide spans 1 to 20; that stretch reads MAAPIILFSFLLFFSVSVSA. 6 cysteine pairs are disulfide-bonded: C38/C66, C42/C72, C47/C122, C59/C79, C78/C105, and C85/C98. 3 residues coordinate Ca(2+): Y58, G60, and Y63. Residue H82 is part of the active site. D83 provides a ligand contact to Ca(2+).

The protein belongs to the phospholipase A2 family. In terms of assembly, interacts with MYB30. Ca(2+) is required as a cofactor. Ubiquitous but expressed at a low level.

The protein localises to the secreted. It localises to the golgi apparatus. It is found in the cytoplasmic vesicle. Its subcellular location is the nucleus. It carries out the reaction a 1,2-diacyl-sn-glycero-3-phosphocholine + H2O = a 1-acyl-sn-glycero-3-phosphocholine + a fatty acid + H(+). Its function is as follows. PA2 catalyzes the calcium-dependent hydrolysis of the 2-acyl groups in 3-sn-phosphoglycerides. Releases lysophospholipids (LPLs) and free fatty acids (FFAs) from membrane phospholipids in response to hormones and other external stimuli. Modulates the trafficking of PIN proteins to the plasma membrane. Negatively regulates MYB30 transcriptional activity and hypersensitive response control. The protein is Phospholipase A2-alpha of Arabidopsis thaliana (Mouse-ear cress).